A 274-amino-acid polypeptide reads, in one-letter code: Diaminopimelate epimerase (274 aa).

Asn11, Gln44, and Asn64 together coordinate substrate. Catalysis depends on Cys73, which acts as the Proton donor. Residues 74-75 (GN), Asn157, Asn190, and 208-209 (ER) each bind substrate. Cys217 functions as the Proton acceptor in the catalytic mechanism. Residue 218-219 (GS) participates in substrate binding.

Belongs to the diaminopimelate epimerase family. In terms of assembly, homodimer.

The protein localises to the cytoplasm. It carries out the reaction (2S,6S)-2,6-diaminopimelate = meso-2,6-diaminopimelate. The protein operates within amino-acid biosynthesis; L-lysine biosynthesis via DAP pathway; DL-2,6-diaminopimelate from LL-2,6-diaminopimelate: step 1/1. Its function is as follows. Catalyzes the stereoinversion of LL-2,6-diaminopimelate (L,L-DAP) to meso-diaminopimelate (meso-DAP), a precursor of L-lysine and an essential component of the bacterial peptidoglycan. The polypeptide is Diaminopimelate epimerase (Pectobacterium atrosepticum (strain SCRI 1043 / ATCC BAA-672) (Erwinia carotovora subsp. atroseptica)).